We begin with the raw amino-acid sequence, 140 residues long: Probable lipoprotein LppE (140 aa).

An N-terminal signal peptide occupies residues 1–21; that stretch reads MCNRLVTVTGVAMVVAAGLSA. Cysteine 22 carries the N-palmitoyl cysteine lipid modification. The S-diacylglycerol cysteine moiety is linked to residue cysteine 22.

Belongs to the mycobacterial 19 kDa antigen family.

It is found in the cell membrane. The protein is Probable lipoprotein LppE (lppE) of Mycobacterium tuberculosis (strain ATCC 25618 / H37Rv).